Consider the following 556-residue polypeptide: Oxygen-dependent choline dehydrogenase (556 aa).

6 to 35 lines the FAD pocket; that stretch reads DYIIIGAGSAGNVLAARLTEDPGVTVLLLE. His475 (proton acceptor) is an active-site residue.

The protein belongs to the GMC oxidoreductase family. Requires FAD as cofactor.

The enzyme catalyses choline + A = betaine aldehyde + AH2. It catalyses the reaction betaine aldehyde + NAD(+) + H2O = glycine betaine + NADH + 2 H(+). It functions in the pathway amine and polyamine biosynthesis; betaine biosynthesis via choline pathway; betaine aldehyde from choline (cytochrome c reductase route): step 1/1. Functionally, involved in the biosynthesis of the osmoprotectant glycine betaine. Catalyzes the oxidation of choline to betaine aldehyde and betaine aldehyde to glycine betaine at the same rate. The polypeptide is Oxygen-dependent choline dehydrogenase (Xanthomonas euvesicatoria pv. vesicatoria (strain 85-10) (Xanthomonas campestris pv. vesicatoria)).